The chain runs to 80 residues: Metallothionein-like protein type 2 (80 aa).

The protein belongs to the metallothionein superfamily. Type 15 family.

Its function is as follows. Metallothioneins have a high content of cysteine residues that bind various heavy metals. In Ricinus communis (Castor bean), this protein is Metallothionein-like protein type 2 (MTI).